The following is a 264-amino-acid chain: uncharacterized protein (264 aa).

6 helical membrane passes run 1–21, 43–63, 95–115, 146–166, 181–201, and 215–235; these read MLLGLGIVVLIYSLIALSVSL, FFGVLNLLIALGVAGIINGFV, VVGLIHAGILMVLTTVALSSL, IATWTSVGIFWFLGLVLLGGL, GWLAVVVIGLTTLVVMVQPFV, and IVANTILIAILVIIVLVMFFP.

The protein to M.pneumoniae MPN_308 C-terminal region.

The protein resides in the cell membrane. This is an uncharacterized protein from Mycoplasma pneumoniae (strain ATCC 29342 / M129 / Subtype 1) (Mycoplasmoides pneumoniae).